A 179-amino-acid polypeptide reads, in one-letter code: Large ribosomal subunit protein uL5 (179 aa).

Belongs to the universal ribosomal protein uL5 family. Part of the 50S ribosomal subunit; part of the 5S rRNA/L5/L18/L25 subcomplex. Contacts the 5S rRNA and the P site tRNA. Forms a bridge to the 30S subunit in the 70S ribosome.

This is one of the proteins that bind and probably mediate the attachment of the 5S RNA into the large ribosomal subunit, where it forms part of the central protuberance. In the 70S ribosome it contacts protein S13 of the 30S subunit (bridge B1b), connecting the 2 subunits; this bridge is implicated in subunit movement. Contacts the P site tRNA; the 5S rRNA and some of its associated proteins might help stabilize positioning of ribosome-bound tRNAs. The chain is Large ribosomal subunit protein uL5 from Dictyoglomus turgidum (strain DSM 6724 / Z-1310).